A 291-amino-acid polypeptide reads, in one-letter code: N-acetylmannosamine kinase (291 aa).

Residues alanine 5–lysine 12 and glycine 132–serine 139 contribute to the ATP site. Zn(2+) contacts are provided by histidine 156, cysteine 166, cysteine 168, and cysteine 173.

The protein belongs to the ROK (NagC/XylR) family. NanK subfamily. In terms of assembly, homodimer.

The catalysed reaction is an N-acyl-D-mannosamine + ATP = an N-acyl-D-mannosamine 6-phosphate + ADP + H(+). It functions in the pathway amino-sugar metabolism; N-acetylneuraminate degradation; D-fructose 6-phosphate from N-acetylneuraminate: step 2/5. Catalyzes the phosphorylation of N-acetylmannosamine (ManNAc) to ManNAc-6-P. The protein is N-acetylmannosamine kinase of Escherichia coli (strain K12 / MC4100 / BW2952).